The sequence spans 1367 residues: DNA-directed RNA polymerase subunit beta' (1367 aa).

Positions 1–34 are disordered; that stretch reads MTSTSPKSRKSSSKRKGSKKKAARSKNVIPPLSK. Basic residues predominate over residues 7–24; it reads KSRKSSSKRKGSKKKAAR. Zn(2+)-binding residues include Cys-250, Cys-317, Cys-324, and Cys-327. Residues 1306–1367 form a disordered region; that stretch reads SVLDDPSDAD…LQEEGLLSDE (62 aa). Residues 1355–1367 show a composition bias toward low complexity; the sequence is LEGLQEEGLLSDE.

Belongs to the RNA polymerase beta' chain family. RpoC2 subfamily. In terms of assembly, in cyanobacteria the RNAP catalytic core is composed of 2 alpha, 1 beta, 1 beta', 1 gamma and 1 omega subunit. When a sigma factor is associated with the core the holoenzyme is formed, which can initiate transcription. Zn(2+) is required as a cofactor.

The enzyme catalyses RNA(n) + a ribonucleoside 5'-triphosphate = RNA(n+1) + diphosphate. DNA-dependent RNA polymerase catalyzes the transcription of DNA into RNA using the four ribonucleoside triphosphates as substrates. The chain is DNA-directed RNA polymerase subunit beta' from Prochlorococcus marinus (strain SARG / CCMP1375 / SS120).